The following is a 337-amino-acid chain: tRNA N6-adenosine threonylcarbamoyltransferase (337 aa).

Fe cation-binding residues include H111 and H115. Substrate contacts are provided by residues 134-138 (LVSGG), D167, G180, and N272. D300 provides a ligand contact to Fe cation.

It belongs to the KAE1 / TsaD family. Requires Fe(2+) as cofactor.

It localises to the cytoplasm. The catalysed reaction is L-threonylcarbamoyladenylate + adenosine(37) in tRNA = N(6)-L-threonylcarbamoyladenosine(37) in tRNA + AMP + H(+). In terms of biological role, required for the formation of a threonylcarbamoyl group on adenosine at position 37 (t(6)A37) in tRNAs that read codons beginning with adenine. Is involved in the transfer of the threonylcarbamoyl moiety of threonylcarbamoyl-AMP (TC-AMP) to the N6 group of A37, together with TsaE and TsaB. TsaD likely plays a direct catalytic role in this reaction. This chain is tRNA N6-adenosine threonylcarbamoyltransferase, found in Salmonella newport (strain SL254).